We begin with the raw amino-acid sequence, 885 residues long: Cadherin-related family member 3 (885 aa).

The N-terminal stretch at methionine 1–alanine 19 is a signal peptide. Residues leucine 20–proline 713 are Extracellular-facing. 6 consecutive Cadherin domains span residues isoleucine 23–phenylalanine 132, leucine 136–phenylalanine 236, threonine 237–threonine 344, glutamine 346–tyrosine 466, aspartate 462–cysteine 566, and threonine 567–valine 695. N-linked (GlcNAc...) asparagine glycosylation is found at asparagine 186 and asparagine 257. An N-linked (GlcNAc...) asparagine glycan is attached at asparagine 624. The helical transmembrane segment at phenylalanine 714–leucine 734 threads the bilayer. Topologically, residues alanine 735 to lysine 885 are cytoplasmic. A disordered region spans residues methionine 808–lysine 885.

In terms of assembly, (Microbial infection) Interacts (via N-terminus) with human rhinovirus C capsid proteins VP1, VP2 and VP3. In terms of tissue distribution, expressed in bronchial epithelium from adults and in fetal lung tissue.

Its subcellular location is the cell membrane. Its function is as follows. Cadherins are calcium-dependent cell adhesion proteins. They preferentially interact with themselves in a homophilic manner in connecting cells; cadherins may thus contribute to the sorting of heterogeneous cell types. Functionally, (Microbial infection) Acts as a receptor for human rhinovirus C. The polypeptide is Cadherin-related family member 3 (CDHR3) (Homo sapiens (Human)).